A 428-amino-acid polypeptide reads, in one-letter code: Serine--tRNA ligase (428 aa).

L-serine is bound at residue 231–233 (TAE). Residue 262–264 (RSE) participates in ATP binding. Glutamate 285 contacts L-serine. Position 349-352 (349-352 (EISS)) interacts with ATP. Serine 385 is a binding site for L-serine.

The protein belongs to the class-II aminoacyl-tRNA synthetase family. Type-1 seryl-tRNA synthetase subfamily. In terms of assembly, homodimer. The tRNA molecule binds across the dimer.

It localises to the cytoplasm. The enzyme catalyses tRNA(Ser) + L-serine + ATP = L-seryl-tRNA(Ser) + AMP + diphosphate + H(+). It catalyses the reaction tRNA(Sec) + L-serine + ATP = L-seryl-tRNA(Sec) + AMP + diphosphate + H(+). The protein operates within aminoacyl-tRNA biosynthesis; selenocysteinyl-tRNA(Sec) biosynthesis; L-seryl-tRNA(Sec) from L-serine and tRNA(Sec): step 1/1. Functionally, catalyzes the attachment of serine to tRNA(Ser). Is also able to aminoacylate tRNA(Sec) with serine, to form the misacylated tRNA L-seryl-tRNA(Sec), which will be further converted into selenocysteinyl-tRNA(Sec). In Staphylococcus aureus (strain MSSA476), this protein is Serine--tRNA ligase.